A 143-amino-acid chain; its full sequence is Putative pre-16S rRNA nuclease (143 aa).

It belongs to the YqgF nuclease family.

It is found in the cytoplasm. Functionally, could be a nuclease involved in processing of the 5'-end of pre-16S rRNA. The chain is Putative pre-16S rRNA nuclease from Agathobacter rectalis (strain ATCC 33656 / DSM 3377 / JCM 17463 / KCTC 5835 / VPI 0990) (Eubacterium rectale).